We begin with the raw amino-acid sequence, 91 residues long: Proline, histidine and glycine-rich protein 1 (91 aa).

The tract at residues 1-91 (MHPGGKGHCG…HCGPHPGPHH (91 aa)) is disordered. Gly residues-rich tracts occupy residues 33–42 (HPGHGPGHCP), 49–63 (GHGG…GHCP), and 70–82 (GHGG…GPGH).

The protein is Proline, histidine and glycine-rich protein 1 (Phgr1) of Mus musculus (Mouse).